A 184-amino-acid polypeptide reads, in one-letter code: MAEPIQVAEEKMKKAIETLKEEFATIRAGRANPHILDKVMVDYYGVPTPIPQVASITVPEARMIVIQPWEARMLKEIEKAIQKSDLGVNPTNDGKVIRLIFPELTEERRKELVKQVKKMAEDAKVAIRNIRREALDEYKKMKKNNEITEDDLKDAEEDVQKLHDKYIEQIEKLLSAKEKEIMEV.

This sequence belongs to the RRF family.

It localises to the cytoplasm. Responsible for the release of ribosomes from messenger RNA at the termination of protein biosynthesis. May increase the efficiency of translation by recycling ribosomes from one round of translation to another. This chain is Ribosome-recycling factor, found in Caldicellulosiruptor bescii (strain ATCC BAA-1888 / DSM 6725 / KCTC 15123 / Z-1320) (Anaerocellum thermophilum).